A 545-amino-acid chain; its full sequence is MPMDIETKQSGDLIFRSKLPDIYIPKHLPLHSYCFENLSEFNSRPCLIDGANDRIYTYAEVELTSRKVAVGLNKLGIQQKDTIMILLPNCPEFVFAFIGASYLGAISTMANPLFTPAEVVKQAKASSAKIVITQACFAGKVKDYAIENDLKVICVDSAPEGCVHFSELIQSDEHEIPDVKIQPDDVVALPYSSGTTGLPKGVMLTHKGLVTSVAQQVDGENANLYMHSDDVLMCVLPLFHIYSLNSVLLCALRVGAAILIMQKFDIAQFLELIPKHKVTIGPFVPPIVLAIAKSPLVHNYDLSSVRTVMSGAAPLGKELEDAVRAKFPNAKLGQGYGMTEAGPVLAMCLAFAKEPFDIKSGACGTVVRNAEMKIVDPDTGCSLPRNQPGEICIRGDQIMKGYLNDPEATARTIEKEGWLHTGDIGFIDDDDELFIVDRLKELIKYKGFQVAPAELEALLINHPDISDAAVVPMIDEQAGEVPVAFVVRSNGSTITEDEVKDFISKQVIFYKRIKRVFFVETVPKSPSGKILRKDLRARLAAGISN.

ATP contacts are provided by Ser-192, Ser-193, Gly-194, Thr-195, Thr-196, and Lys-200. (E)-4-coumaroyl-AMP contacts are provided by Tyr-242 and Ser-246. CoA is bound at residue Lys-263. Positions 265-334 (DIAQFLELIP…AKFPNAKLGQ (70 aa)) are SBD1. Residues Ala-312, Gln-334, Gly-335, Thr-339, and Met-347 each coordinate (E)-4-coumaroyl-AMP. ATP-binding residues include Gln-334, Gly-335, and Thr-339. An SBD2 region spans residues 335–402 (GYGMTEAGPV…IRGDQIMKGY (68 aa)). ATP is bound by residues Asp-423 and Arg-438. (E)-4-coumaroyl-AMP is bound by residues Lys-440 and Lys-444. Residues Lys-446 and Gly-447 each coordinate CoA. An ATP-binding site is contributed by Lys-529.

This sequence belongs to the ATP-dependent AMP-binding enzyme family. It depends on Mg(2+) as a cofactor.

The catalysed reaction is (E)-4-coumarate + ATP + CoA = (E)-4-coumaroyl-CoA + AMP + diphosphate. It catalyses the reaction (E)-4-coumarate + ATP + H(+) = (E)-4-coumaroyl-AMP + diphosphate. It carries out the reaction (E)-4-coumaroyl-AMP + CoA = (E)-4-coumaroyl-CoA + AMP + H(+). The protein operates within phytoalexin biosynthesis; 3,4',5-trihydroxystilbene biosynthesis; 3,4',5-trihydroxystilbene from trans-4-coumarate: step 1/2. Its function is as follows. Carboxylate--CoA ligase that may use 4-coumarate as substrate. Follows a two-step reaction mechanism, wherein the carboxylate substrate first undergoes adenylation by ATP, followed by a thioesterification in the presence of CoA to yield the final CoA thioester. The protein is 4-coumarate--CoA ligase 2 (4CL2) of Solanum tuberosum (Potato).